The sequence spans 88 residues: Large ribosomal subunit protein bL27 (88 aa).

The segment at 1–26 (MAHKKGTGSTRNGRDSNSKRLGVKAY) is disordered.

It belongs to the bacterial ribosomal protein bL27 family.

The sequence is that of Large ribosomal subunit protein bL27 from Prochlorococcus marinus (strain MIT 9211).